Reading from the N-terminus, the 44-residue chain is Photosystem I reaction center subunit IX (44 aa).

A helical membrane pass occupies residues 7-27; that stretch reads YLSVAPVISTLWFGSLAGLLI.

The protein belongs to the PsaJ family.

It is found in the plastid. It localises to the chloroplast thylakoid membrane. Its function is as follows. May help in the organization of the PsaE and PsaF subunits. This chain is Photosystem I reaction center subunit IX, found in Ceratophyllum demersum (Rigid hornwort).